A 69-amino-acid polypeptide reads, in one-letter code: Large ribosomal subunit protein uL29 (69 aa).

This sequence belongs to the universal ribosomal protein uL29 family.

The polypeptide is Large ribosomal subunit protein uL29 (Lachnoclostridium phytofermentans (strain ATCC 700394 / DSM 18823 / ISDg) (Clostridium phytofermentans)).